A 434-amino-acid polypeptide reads, in one-letter code: 4-hydroxy-3-methylbut-2-en-1-yl diphosphate synthase (flavodoxin) (434 aa).

Over residues 1–15 (MQSEAQSPRSSQICS) the composition is skewed to polar residues. The disordered stretch occupies residues 1–24 (MQSEAQSPRSSQICSTEPVFGGHQ). [4Fe-4S] cluster-binding residues include Cys322, Cys325, Cys368, and Glu375.

Belongs to the IspG family. [4Fe-4S] cluster is required as a cofactor.

It catalyses the reaction (2E)-4-hydroxy-3-methylbut-2-enyl diphosphate + oxidized [flavodoxin] + H2O + 2 H(+) = 2-C-methyl-D-erythritol 2,4-cyclic diphosphate + reduced [flavodoxin]. It functions in the pathway isoprenoid biosynthesis; isopentenyl diphosphate biosynthesis via DXP pathway; isopentenyl diphosphate from 1-deoxy-D-xylulose 5-phosphate: step 5/6. In terms of biological role, converts 2C-methyl-D-erythritol 2,4-cyclodiphosphate (ME-2,4cPP) into 1-hydroxy-2-methyl-2-(E)-butenyl 4-diphosphate. This chain is 4-hydroxy-3-methylbut-2-en-1-yl diphosphate synthase (flavodoxin), found in Burkholderia ambifaria (strain MC40-6).